The chain runs to 341 residues: N-acetyl-gamma-glutamyl-phosphate reductase 2 (341 aa).

Residue Cys146 is part of the active site.

This sequence belongs to the NAGSA dehydrogenase family. Type 1 subfamily.

The protein localises to the cytoplasm. The enzyme catalyses N-acetyl-L-glutamate 5-semialdehyde + phosphate + NADP(+) = N-acetyl-L-glutamyl 5-phosphate + NADPH + H(+). It functions in the pathway amino-acid biosynthesis; L-arginine biosynthesis; N(2)-acetyl-L-ornithine from L-glutamate: step 3/4. Functionally, catalyzes the NADPH-dependent reduction of N-acetyl-5-glutamyl phosphate to yield N-acetyl-L-glutamate 5-semialdehyde. This chain is N-acetyl-gamma-glutamyl-phosphate reductase 2, found in Lactiplantibacillus plantarum (strain ATCC BAA-793 / NCIMB 8826 / WCFS1) (Lactobacillus plantarum).